The sequence spans 282 residues: Pantothenate synthetase (282 aa).

Position 28-35 (28-35 (MGALHSGH)) interacts with ATP. The Proton donor role is filled by His35. Gln59 lines the (R)-pantoate pocket. Gln59 contributes to the beta-alanine binding site. Residue 146 to 149 (GEKD) coordinates ATP. Gln152 is a binding site for (R)-pantoate. ATP is bound by residues Val175 and 183–186 (LSSR).

It belongs to the pantothenate synthetase family. In terms of assembly, homodimer.

It localises to the cytoplasm. The catalysed reaction is (R)-pantoate + beta-alanine + ATP = (R)-pantothenate + AMP + diphosphate + H(+). The protein operates within cofactor biosynthesis; (R)-pantothenate biosynthesis; (R)-pantothenate from (R)-pantoate and beta-alanine: step 1/1. Its function is as follows. Catalyzes the condensation of pantoate with beta-alanine in an ATP-dependent reaction via a pantoyl-adenylate intermediate. This chain is Pantothenate synthetase, found in Salinispora arenicola (strain CNS-205).